Reading from the N-terminus, the 472-residue chain is RING-H2 finger protein ATL13 (472 aa).

Residues 51 to 71 form a helical membrane-spanning segment; sequence ILLIIIILSIIFFISGLLHLL. The RING-type; atypical zinc-finger motif lies at 134–176; it reads CAVCLCEFETEDKLRLLPKCSHAFHMDCIDTWLLSHSTCPLCR. Positions 320–340 are disordered; sequence VSTKKQSSKNRGLPGHRTAMS.

The protein belongs to the RING-type zinc finger family. ATL subfamily.

Its subcellular location is the membrane. It catalyses the reaction S-ubiquitinyl-[E2 ubiquitin-conjugating enzyme]-L-cysteine + [acceptor protein]-L-lysine = [E2 ubiquitin-conjugating enzyme]-L-cysteine + N(6)-ubiquitinyl-[acceptor protein]-L-lysine.. Its pathway is protein modification; protein ubiquitination. The chain is RING-H2 finger protein ATL13 (ATL13) from Arabidopsis thaliana (Mouse-ear cress).